Here is a 504-residue protein sequence, read N- to C-terminus: Lysine--tRNA ligase (504 aa).

Glu-411 and Glu-418 together coordinate Mg(2+).

This sequence belongs to the class-II aminoacyl-tRNA synthetase family. As to quaternary structure, homodimer. The cofactor is Mg(2+).

The protein localises to the cytoplasm. The enzyme catalyses tRNA(Lys) + L-lysine + ATP = L-lysyl-tRNA(Lys) + AMP + diphosphate. This Clostridium botulinum (strain Okra / Type B1) protein is Lysine--tRNA ligase.